Here is a 235-residue protein sequence, read N- to C-terminus: Probable WRKY transcription factor 66 (235 aa).

The segment at residues 79–147 (SPTPAHIDGF…YVGQHACEAP (69 aa)) is a DNA-binding region (WRKY).

This sequence belongs to the WRKY group III family.

The protein localises to the nucleus. Its function is as follows. Transcription factor. Interacts specifically with the W box (5'-(T)TGAC[CT]-3'), a frequently occurring elicitor-responsive cis-acting element. This Arabidopsis thaliana (Mouse-ear cress) protein is Probable WRKY transcription factor 66 (WRKY66).